Here is a 125-residue protein sequence, read N- to C-terminus: Ribosome-binding factor A (125 aa).

This sequence belongs to the RbfA family. In terms of assembly, monomer. Binds 30S ribosomal subunits, but not 50S ribosomal subunits or 70S ribosomes.

It localises to the cytoplasm. One of several proteins that assist in the late maturation steps of the functional core of the 30S ribosomal subunit. Associates with free 30S ribosomal subunits (but not with 30S subunits that are part of 70S ribosomes or polysomes). Required for efficient processing of 16S rRNA. May interact with the 5'-terminal helix region of 16S rRNA. This chain is Ribosome-binding factor A, found in Thermosipho melanesiensis (strain DSM 12029 / CIP 104789 / BI429).